The primary structure comprises 345 residues: Putative [LysW]-L-2-aminoadipate/[LysW]-L-glutamate phosphate reductase (345 aa).

Ser11–Thr14 lines the NADP(+) pocket. The segment at Thr34–Arg56 is disordered. Cys146 is a catalytic residue. Position 309 (Asn309) interacts with NADP(+).

The protein belongs to the NAGSA dehydrogenase family. Type 1 subfamily. LysY sub-subfamily.

The protein resides in the cytoplasm. It catalyses the reaction [amino-group carrier protein]-C-terminal-N-(1-carboxy-5-oxopentan-1-yl)-L-glutamine + phosphate + NADP(+) = [amino-group carrier protein]-C-terminal-N-(1-carboxy-5-phosphooxy-5-oxopentan-1-yl)-L-glutamine + NADPH + H(+). The catalysed reaction is [amino-group carrier protein]-C-terminal-gamma-(L-glutamyl-5-semialdehyde)-L-glutamate + phosphate + NADP(+) = [amino-group carrier protein]-C-terminal-gamma-(5-phospho-L-glutamyl)-L-glutamate + NADPH + H(+). The protein operates within amino-acid biosynthesis; L-lysine biosynthesis via AAA pathway; L-lysine from L-alpha-aminoadipate (Thermus route): step 3/5. It participates in amino-acid biosynthesis; L-arginine biosynthesis. Involved in both the arginine and lysine biosynthetic pathways. The chain is Putative [LysW]-L-2-aminoadipate/[LysW]-L-glutamate phosphate reductase from Haloarcula marismortui (strain ATCC 43049 / DSM 3752 / JCM 8966 / VKM B-1809) (Halobacterium marismortui).